Consider the following 146-residue polypeptide: Large ribosomal subunit protein uL15 (146 aa).

Residues 1–13 (MKLHELKAAEGSR) show a composition bias toward basic and acidic residues. The disordered stretch occupies residues 1-61 (MKLHELKAAE…GGQTPLFRRM (61 aa)). Gly residues-rich tracts occupy residues 23 to 35 (TSSG…GRGQ) and 42 to 52 (SGGGVRLGFEG).

The protein belongs to the universal ribosomal protein uL15 family. As to quaternary structure, part of the 50S ribosomal subunit.

Functionally, binds to the 23S rRNA. The sequence is that of Large ribosomal subunit protein uL15 from Streptococcus uberis (strain ATCC BAA-854 / 0140J).